Here is a 348-residue protein sequence, read N- to C-terminus: UDP-glucose 4-epimerase (348 aa).

Residues 12-14 (GYI), 33-37 (DNFHN), 66-67 (DI), F88, and K92 contribute to the NAD(+) site. 132-134 (SAT) lines the substrate pocket. Y157 (proton acceptor) is an active-site residue. NAD(+) contacts are provided by K161 and Y185. Substrate contacts are provided by residues 185 to 187 (YFN), 206 to 208 (NNL), 224 to 226 (NVF), R239, and 300 to 303 (REGD).

The protein belongs to the NAD(P)-dependent epimerase/dehydratase family. As to quaternary structure, homodimer. The cofactor is NAD(+).

It catalyses the reaction UDP-alpha-D-glucose = UDP-alpha-D-galactose. The catalysed reaction is UDP-N-acetyl-alpha-D-glucosamine = UDP-N-acetyl-alpha-D-galactosamine. It functions in the pathway carbohydrate metabolism; galactose metabolism. Catalyzes two distinct but analogous reactions: the reversible epimerization of UDP-glucose to UDP-galactose and the reversible epimerization of UDP-N-acetylglucosamine to UDP-N-acetylgalactosamine. The reaction with UDP-Gal plays a critical role in the Leloir pathway of galactose catabolism in which galactose is converted to the glycolytic intermediate glucose 6-phosphate. It contributes to the catabolism of dietary galactose and enables the endogenous biosynthesis of both UDP-Gal and UDP-GalNAc when exogenous sources are limited. Both UDP-sugar interconversions are important in the synthesis of glycoproteins and glycolipids. This Pongo abelii (Sumatran orangutan) protein is UDP-glucose 4-epimerase (GALE).